A 284-amino-acid chain; its full sequence is 2-dehydro-3-deoxyphosphooctonate aldolase (284 aa).

Belongs to the KdsA family.

Its subcellular location is the cytoplasm. It catalyses the reaction D-arabinose 5-phosphate + phosphoenolpyruvate + H2O = 3-deoxy-alpha-D-manno-2-octulosonate-8-phosphate + phosphate. It functions in the pathway carbohydrate biosynthesis; 3-deoxy-D-manno-octulosonate biosynthesis; 3-deoxy-D-manno-octulosonate from D-ribulose 5-phosphate: step 2/3. It participates in bacterial outer membrane biogenesis; lipopolysaccharide biosynthesis. This is 2-dehydro-3-deoxyphosphooctonate aldolase from Pectobacterium atrosepticum (strain SCRI 1043 / ATCC BAA-672) (Erwinia carotovora subsp. atroseptica).